The primary structure comprises 93 residues: Small ribosomal subunit protein bS18 (93 aa).

Belongs to the bacterial ribosomal protein bS18 family. As to quaternary structure, part of the 30S ribosomal subunit. Forms a tight heterodimer with protein bS6.

Binds as a heterodimer with protein bS6 to the central domain of the 16S rRNA, where it helps stabilize the platform of the 30S subunit. The sequence is that of Small ribosomal subunit protein bS18 from Variovorax paradoxus (strain S110).